The primary structure comprises 150 residues: FAD synthase (150 aa).

ATP-binding positions include valine 10–phenylalanine 11, histidine 15–histidine 18, aspartate 97, and tyrosine 124.

It belongs to the archaeal FAD synthase family. Homodimer. A divalent metal cation is required as a cofactor.

It catalyses the reaction FMN + ATP + H(+) = FAD + diphosphate. It participates in cofactor biosynthesis; FAD biosynthesis; FAD from FMN: step 1/1. Catalyzes the transfer of the AMP portion of ATP to flavin mononucleotide (FMN) to produce flavin adenine dinucleotide (FAD) coenzyme. The protein is FAD synthase of Methanopyrus kandleri (strain AV19 / DSM 6324 / JCM 9639 / NBRC 100938).